The following is a 399-amino-acid chain: Enoyl-[acyl-carrier-protein] reductase [NADH] (399 aa).

Residues 48-53, 74-75, 111-112, and 139-140 each bind NAD(+); these read GASTGY, FE, DA, and LA. Residue Tyr225 coordinates substrate. The active-site Proton donor is Tyr235. Residues Lys244 and 274 to 276 each bind NAD(+); that span reads VVT.

Belongs to the TER reductase family. Monomer.

It carries out the reaction a 2,3-saturated acyl-[ACP] + NAD(+) = a (2E)-enoyl-[ACP] + NADH + H(+). Its pathway is lipid metabolism; fatty acid biosynthesis. Its function is as follows. Involved in the final reduction of the elongation cycle of fatty acid synthesis (FAS II). Catalyzes the reduction of a carbon-carbon double bond in an enoyl moiety that is covalently linked to an acyl carrier protein (ACP). The chain is Enoyl-[acyl-carrier-protein] reductase [NADH] from Yersinia pseudotuberculosis serotype O:1b (strain IP 31758).